A 120-amino-acid chain; its full sequence is Large-conductance mechanosensitive channel (120 aa).

2 helical membrane-spanning segments follow: residues E7–F27 and G64–V84.

This sequence belongs to the MscL family. As to quaternary structure, homopentamer.

It localises to the cell membrane. Channel that opens in response to stretch forces in the membrane lipid bilayer. May participate in the regulation of osmotic pressure changes within the cell. The chain is Large-conductance mechanosensitive channel from Staphylococcus aureus (strain Mu3 / ATCC 700698).